Here is a 191-residue protein sequence, read N- to C-terminus: 3-isopropylmalate dehydratase small subunit (191 aa).

Belongs to the LeuD family. LeuD type 1 subfamily. As to quaternary structure, heterodimer of LeuC and LeuD.

The catalysed reaction is (2R,3S)-3-isopropylmalate = (2S)-2-isopropylmalate. It participates in amino-acid biosynthesis; L-leucine biosynthesis; L-leucine from 3-methyl-2-oxobutanoate: step 2/4. In terms of biological role, catalyzes the isomerization between 2-isopropylmalate and 3-isopropylmalate, via the formation of 2-isopropylmaleate. This Anaeromyxobacter sp. (strain K) protein is 3-isopropylmalate dehydratase small subunit.